The sequence spans 61 residues: Small ribosomal subunit protein uS14 (61 aa).

Acidic residues predominate over residues 1 to 12; it reads MSESETTDEPDS. A disordered region spans residues 1–25; the sequence is MSESETTDEPDSETASSERTGQLES. 4 residues coordinate Zn(2+): cysteine 26, cysteine 29, cysteine 44, and cysteine 47.

The protein belongs to the universal ribosomal protein uS14 family. Zinc-binding uS14 subfamily. In terms of assembly, part of the 30S ribosomal subunit. The cofactor is Zn(2+).

Its function is as follows. Binds 16S rRNA, required for the assembly of 30S particles. This Haloarcula marismortui (strain ATCC 43049 / DSM 3752 / JCM 8966 / VKM B-1809) (Halobacterium marismortui) protein is Small ribosomal subunit protein uS14.